The following is a 111-amino-acid chain: Ribosome-binding factor A (111 aa).

The protein belongs to the RbfA family. In terms of assembly, monomer. Binds 30S ribosomal subunits, but not 50S ribosomal subunits or 70S ribosomes.

The protein resides in the cytoplasm. Its function is as follows. One of several proteins that assist in the late maturation steps of the functional core of the 30S ribosomal subunit. Associates with free 30S ribosomal subunits (but not with 30S subunits that are part of 70S ribosomes or polysomes). Required for efficient processing of 16S rRNA. May interact with the 5'-terminal helix region of 16S rRNA. The protein is Ribosome-binding factor A of Helicobacter pylori (strain G27).